The chain runs to 156 residues: Small ribosomal subunit protein uS7 (156 aa).

It belongs to the universal ribosomal protein uS7 family. In terms of assembly, part of the 30S ribosomal subunit. Contacts proteins S9 and S11.

Functionally, one of the primary rRNA binding proteins, it binds directly to 16S rRNA where it nucleates assembly of the head domain of the 30S subunit. Is located at the subunit interface close to the decoding center, probably blocks exit of the E-site tRNA. This Mycobacteroides abscessus (strain ATCC 19977 / DSM 44196 / CCUG 20993 / CIP 104536 / JCM 13569 / NCTC 13031 / TMC 1543 / L948) (Mycobacterium abscessus) protein is Small ribosomal subunit protein uS7.